The following is a 244-amino-acid chain: 7-cyano-7-deazaguanine synthase (244 aa).

19 to 29 (FSGGQDSTTCL) lines the ATP pocket. Positions 207, 222, 225, and 228 each coordinate Zn(2+).

This sequence belongs to the QueC family. It depends on Zn(2+) as a cofactor.

It carries out the reaction 7-carboxy-7-deazaguanine + NH4(+) + ATP = 7-cyano-7-deazaguanine + ADP + phosphate + H2O + H(+). It participates in purine metabolism; 7-cyano-7-deazaguanine biosynthesis. Catalyzes the ATP-dependent conversion of 7-carboxy-7-deazaguanine (CDG) to 7-cyano-7-deazaguanine (preQ(0)). The protein is 7-cyano-7-deazaguanine synthase of Bordetella avium (strain 197N).